The following is a 451-amino-acid chain: Probable D-serine dehydratase (451 aa).

Lys119 is modified (N6-(pyridoxal phosphate)lysine).

Belongs to the serine/threonine dehydratase family. DsdA subfamily. Pyridoxal 5'-phosphate is required as a cofactor.

It catalyses the reaction D-serine = pyruvate + NH4(+). The chain is Probable D-serine dehydratase from Acidovorax sp. (strain JS42).